Consider the following 256-residue polypeptide: Lysine-rich coiled-coil protein 1 (256 aa).

2 disordered regions span residues glutamine 61–arginine 83 and glycine 141–phenylalanine 256. 2 stretches are compositionally biased toward polar residues: residues proline 64–glutamine 79 and glycine 141–glutamine 153. Composition is skewed to basic and acidic residues over residues histidine 161–lysine 188 and lysine 218–glutamate 227. Residues threonine 208–methionine 247 are a coiled coil.

The protein is Lysine-rich coiled-coil protein 1 (Krcc1) of Rattus norvegicus (Rat).